The chain runs to 1593 residues: MAAATLSFGPEREAEPAKEARVVGSELVDTYTVYVIQVTDGNHEWTIKHRYSDFHDLHEKLVAERKIDKSLLPPKKIIGKNSRSLVEKRERDLEVYLQTLLTTFPDVAPRVLAHFLHFHLYEVNGVTAALAEELFEKGEQLLGAGEVFAIRPLQLYAITEQLQQGKPTCASGDAKTDLGHILDFTCRLKYLKVSGTEGPFGTSNIKEQLLPFDLSIFKSLHQVEISHCDAKHIRGLVTSKPTLATMSVRFSATSMKEVLAPEASEFDEWEPEGTATLGGPVTAIIPTWQALTTLDLSHNSICEIDESVKLIPKIEYLDLSHNGLRVVDNLQHLYNLVHLDLSYNKLSSLEGVHTKLGNVKTLNLAGNFLESLSGLHKLYSLVNVDLRDNRIEQLDEVKSIGSLPCLERLTLLNNPLSIIPDYRTKVLSQFGERASEICLDDVATTEKELDTVEVLKAIQKAKDVKSKLSNTEKKAGEDFRLPPAPCIRPGGSPPAAPASASLPQPILSNQGIMFVQEEALASSLSSTDSLPPEDHRPIARACSDSLESIPAGQVASDDLRDVPGAVGGVSPDHAEPEVQVVPGSGQIIFLPFTCIGYTATNQDFIQRLSTLIRQAIERQLPAWIEAANQREEAHGEQGEEEEEEEEEEDVAENRYFEMGPPDAEEEEGSGQGEEDEEDEDEEAEEERLALEWALGADEDFLLEHIRILKVLWCFLIHVQGSIRQFAACLVLTDFGIAVFEIPHQESRGSSQHILSSLRFVFCFPHGDLTEFGFLMPELCLVLKVRHSENTLFIISDAANLHEFHADLRSCFAPQHMAMLCSPILYGSHTTLQEFLRQLLTFYKVAGGSQERSQGCFPVYLVYSDKRMVQTPAGDYSGNIEWASCTLCSAVRRSCCAPSEAVKSAAIPYWLLLTSQHLNVIKADFNPMPNRGTHNCRNRNSFKLSRVPLSTVLLDPTRSCTQPRGAFADGHVLELLVGYRFVTAIFVLPHEKFHFLRVYNQLRASLQDLKTVVISKNPSAKPRNQPAKSRASAEQRLQETPADAPAPAAVPPTASAPAPAEALAPDLAPVQAPGEDRGLTSAEAPAAAEAPAAAEAPAAAEAPAAAEAPAAAEAPAAAEAPAPAEAPAAAEAPAAAEAPAAAEAPAAAEAPASAEAPAPNQAPAPARGPAPARGPAPAGGPAPAEALAQAEVPAQYPSERLIQSTSEENQIPSHLPVCPSLQHIARLRGRAIIDLFHNSIAEVENEELRHLLWSSVVFYQTPGLEVTACVLLSSKAVYFILHDGLRRYFSEPLQDFWHQKNTDYNNSPFHVSQCFVLKLSDLQSVNVGLFDQYFRLTGSSPTQVVTCLTRDSYLTHCFLQHLMLVLSSLERTPSPEPVDKDFYSEFGDKNTGKMENYELIHSSRVKFTYPSEEEVGDLTYIVAQKMADPAKNPALSILLYIQAFQVVTPHLGRGRGPLRPKTLLLTSAEIFLLDEDYIHYPLPEFAKEPPQRDRYRLDDGRRVRDLDRVLMGYYPYPQALTLVFDDTQGHDLMGSVTLDHFGEMPGGPGRVGQGREVQWQVFVPSAESREKLISLLARQWEALCGRELPVELTG.

The segment at 1-134 (MAAATLSFGP…GVTAALAEEL (134 aa)) is necessary for binding to phosphoinositide-3-P; not sufficient for targeting to endosomes. The PX domain maps to 12 to 122 (REAEPAKEAR…AHFLHFHLYE (111 aa)). A necessary for homooligomerization and targeting to endosomes region spans residues 121–695 (YEVNGVTAAL…ERLALEWALG (575 aa)). The segment at 246–869 (MSVRFSATSM…LVYSDKRMVQ (624 aa)) is interaction with PAK1. LRR repeat units follow at residues 290 to 311 (ALTTLDLSHNSICEIDESVKLI), 313 to 334 (KIEYLDLSHNGLRVVDNLQHLY), 335 to 356 (NLVHLDLSYNKLSSLEGVHTKL), 358 to 379 (NVKTLNLAGNFLESLSGLHKLY), 380 to 401 (SLVNVDLRDNRIEQLDEVKSIG), and 405 to 426 (CLERLTLLNNPLSIIPDYRTKV). A compositionally biased stretch (basic and acidic residues) spans 466–480 (SKLSNTEKKAGEDFR). The tract at residues 466–499 (SKLSNTEKKAGEDFRLPPAPCIRPGGSPPAAPAS) is disordered. The span at 482 to 496 (PPAPCIRPGGSPPAA) shows a compositional bias: pro residues. Serine 543, serine 545, and serine 548 each carry phosphoserine. The stretch at 624 to 694 (IEAANQREEA…EERLALEWAL (71 aa)) forms a coiled coil. Positions 629 to 687 (QREEAHGEQGEEEEEEEEEEDVAENRYFEMGPPDAEEEEGSGQGEEDEEDEDEEAEEER) are disordered. Composition is skewed to acidic residues over residues 638 to 650 (GEEEEEEEEEEDV) and 662 to 685 (DAEEEEGSGQGEEDEEDEDEEAEE). The segment at 661 to 869 (PDAEEEEGSG…LVYSDKRMVQ (209 aa)) is interaction with LIMK. An interaction with ITGA5 region spans residues 709 to 807 (KVLWCFLIHV…ANLHEFHADL (99 aa)). Residues 1016-1185 (NPSAKPRNQP…PAGGPAPAEA (170 aa)) form a disordered region. Low complexity-rich tracts occupy residues 1038-1069 (ETPADAPAPAAVPPTASAPAPAEALAPDLAPV) and 1081-1158 (AEAP…APAP). A run of 10 repeats spans residues 1081 to 1086 (AEAPAA), 1087 to 1092 (AEAPAA), 1093 to 1098 (AEAPAA), 1099 to 1104 (AEAPAA), 1105 to 1110 (AEAPAA), 1111 to 1116 (AEAPAA), 1123 to 1128 (AEAPAA), 1129 to 1134 (AEAPAA), 1135 to 1140 (AEAPAA), and 1141 to 1146 (AEAPAA). The tract at residues 1081–1146 (AEAPAAAEAP…APAAAEAPAA (66 aa)) is 10 X 6 AA tandem repeat of A-E-A-P-A-A. A compositionally biased stretch (pro residues) spans 1159–1179 (NQAPAPARGPAPARGPAPAGG). Threonine 1371 is modified (phosphothreonine). Phosphoserine is present on serine 1373.

In terms of assembly, homooligomer. Interacts with GRB2. Interacts with PIK3R1; probably associates with the PI3-kinase complex. Interacts with IRS4. Found in a complex with ITGA5 and PAK1. Found in a complex with LIMK1 and PAK1. Interacts with ITGA5 (via cytoplasmic domain); this interaction is direct. Interacts with PAK1 (via kinase domain); this interaction is direct and is increased upon activation of PAK1. Interacts with LIMK1 (via PDZ and kinase domain); this interaction is direct. Interacts with LIMK2; this interaction depends on LIMK2 activity. Interacts with RAC1 (activated state). Interacts with STK11; this interaction may increase STK11 activity. As to expression, highly expressed in brain and kidney. Moderately expressed in heart, liver, lung and skeletal muscle. Not detected in spleen and testis.

Its subcellular location is the cell membrane. The protein localises to the cytoplasm. The protein resides in the early endosome. It localises to the recycling endosome. Its function is as follows. Acts either as the functional imidazoline-1 receptor (I1R) candidate or as a membrane-associated mediator of the I1R signaling. Binds numerous imidazoline ligands that induces initiation of cell-signaling cascades triggering to cell survival, growth and migration. Its activation by the agonist rilmenidine induces an increase in phosphorylation of mitogen-activated protein kinases MAPK1 and MAPK3 in rostral ventrolateral medulla (RVLM) neurons that exhibited rilmenidine-evoked hypotension. Blocking its activation with efaroxan abolished rilmenidine-induced mitogen-activated protein kinase phosphorylation in RVLM neurons. Acts as a modulator of Rac-regulated signal transduction pathways. Suppresses Rac1-stimulated cell migration by interacting with PAK1 and inhibiting its kinase activity. Also blocks Pak-independent Rac signaling by interacting with RAC1 and inhibiting Rac1-stimulated NF-kB response element and cyclin D1 promoter activation. Also inhibits LIMK1 kinase activity by reducing LIMK1 'Tyr-508' phosphorylation. Inhibits Rac-induced cell migration and invasion in breast and colon epithelial cells. Inhibits lamellipodia formation, when overexpressed. Plays a role in protection against apoptosis. Involved in association with IRS4 in the enhancement of insulin activation of MAPK1 and MAPK3. When overexpressed, induces a redistribution of cell surface ITGA5 integrin to intracellular endosomal structures. In Mus musculus (Mouse), this protein is Nischarin (Nisch).